A 552-amino-acid chain; its full sequence is Urocanate hydratase (552 aa).

NAD(+)-binding positions include 49–50 (GG), Gln127, 173–175 (GMG), Glu193, Arg198, 239–240 (NA), 260–264 (QTSAH), 270–271 (YI), and Tyr319. Cys407 is an active-site residue. Gly489 is a binding site for NAD(+).

The protein belongs to the urocanase family. NAD(+) is required as a cofactor.

It localises to the cytoplasm. It catalyses the reaction 4-imidazolone-5-propanoate = trans-urocanate + H2O. Its pathway is amino-acid degradation; L-histidine degradation into L-glutamate; N-formimidoyl-L-glutamate from L-histidine: step 2/3. Catalyzes the conversion of urocanate to 4-imidazolone-5-propionate. In Geobacillus sp. (strain WCH70), this protein is Urocanate hydratase.